A 433-amino-acid chain; its full sequence is UDP-N-acetylglucosamine 1-carboxyvinyltransferase (433 aa).

Residue 22–23 (KN) participates in phosphoenolpyruvate binding. Arg-96 is a UDP-N-acetyl-alpha-D-glucosamine binding site. Cys-120 (proton donor) is an active-site residue. Cys-120 is subject to 2-(S-cysteinyl)pyruvic acid O-phosphothioketal. Residues 125–129 (RPIDL), Asp-308, and Ile-330 contribute to the UDP-N-acetyl-alpha-D-glucosamine site.

Belongs to the EPSP synthase family. MurA subfamily.

It localises to the cytoplasm. The catalysed reaction is phosphoenolpyruvate + UDP-N-acetyl-alpha-D-glucosamine = UDP-N-acetyl-3-O-(1-carboxyvinyl)-alpha-D-glucosamine + phosphate. Its pathway is cell wall biogenesis; peptidoglycan biosynthesis. Cell wall formation. Adds enolpyruvyl to UDP-N-acetylglucosamine. The polypeptide is UDP-N-acetylglucosamine 1-carboxyvinyltransferase (Koribacter versatilis (strain Ellin345)).